The sequence spans 702 residues: Polyribonucleotide nucleotidyltransferase (702 aa).

Asp487 and Asp493 together coordinate Mg(2+). Residues 554-613 (PKILTMQINPDKIRDVIGPSGKQINKIIEETGVKIDIEQDGTIFISSVNEEMNKKAKKII) form the KH domain. The region spanning 623-691 (GQVYLGKVKR…KQGRVNLSRK (69 aa)) is the S1 motif domain.

It belongs to the polyribonucleotide nucleotidyltransferase family. It depends on Mg(2+) as a cofactor.

Its subcellular location is the cytoplasm. The enzyme catalyses RNA(n+1) + phosphate = RNA(n) + a ribonucleoside 5'-diphosphate. In terms of biological role, involved in mRNA degradation. Catalyzes the phosphorolysis of single-stranded polyribonucleotides processively in the 3'- to 5'-direction. This is Polyribonucleotide nucleotidyltransferase from Anoxybacillus flavithermus (strain DSM 21510 / WK1).